Reading from the N-terminus, the 508-residue chain is Photosystem II CP47 reaction center protein (508 aa).

6 consecutive transmembrane segments (helical) span residues 21–36 (AVHI…WAGS), 101–115 (IVFS…IWHW), 140–156 (GIHL…FGAF), 203–218 (IAAG…FHLS), 237–252 (VLSS…AFVV), and 457–472 (TFAL…HGAR).

This sequence belongs to the PsbB/PsbC family. PsbB subfamily. As to quaternary structure, PSII is composed of 1 copy each of membrane proteins PsbA, PsbB, PsbC, PsbD, PsbE, PsbF, PsbH, PsbI, PsbJ, PsbK, PsbL, PsbM, PsbT, PsbX, PsbY, PsbZ, Psb30/Ycf12, at least 3 peripheral proteins of the oxygen-evolving complex and a large number of cofactors. It forms dimeric complexes. Binds multiple chlorophylls. PSII binds additional chlorophylls, carotenoids and specific lipids. is required as a cofactor.

The protein localises to the plastid. Its subcellular location is the chloroplast thylakoid membrane. One of the components of the core complex of photosystem II (PSII). It binds chlorophyll and helps catalyze the primary light-induced photochemical processes of PSII. PSII is a light-driven water:plastoquinone oxidoreductase, using light energy to abstract electrons from H(2)O, generating O(2) and a proton gradient subsequently used for ATP formation. The protein is Photosystem II CP47 reaction center protein of Hordeum vulgare (Barley).